We begin with the raw amino-acid sequence, 259 residues long: Deoxyribose-phosphate aldolase (259 aa).

Catalysis depends on Asp-102, which acts as the Proton donor/acceptor. The active-site Schiff-base intermediate with acetaldehyde is the Lys-167. The active-site Proton donor/acceptor is Lys-201.

This sequence belongs to the DeoC/FbaB aldolase family. DeoC type 2 subfamily.

It localises to the cytoplasm. It catalyses the reaction 2-deoxy-D-ribose 5-phosphate = D-glyceraldehyde 3-phosphate + acetaldehyde. It participates in carbohydrate degradation; 2-deoxy-D-ribose 1-phosphate degradation; D-glyceraldehyde 3-phosphate and acetaldehyde from 2-deoxy-alpha-D-ribose 1-phosphate: step 2/2. In terms of biological role, catalyzes a reversible aldol reaction between acetaldehyde and D-glyceraldehyde 3-phosphate to generate 2-deoxy-D-ribose 5-phosphate. The chain is Deoxyribose-phosphate aldolase from Cronobacter sakazakii (strain ATCC BAA-894) (Enterobacter sakazakii).